The following is an 89-amino-acid chain: Putative regulatory protein CYB_0055 (89 aa).

Belongs to the RemA family.

The sequence is that of Putative regulatory protein CYB_0055 from Synechococcus sp. (strain JA-2-3B'a(2-13)) (Cyanobacteria bacterium Yellowstone B-Prime).